Reading from the N-terminus, the 500-residue chain is Probable malate:quinone oxidoreductase (500 aa).

This sequence belongs to the MQO family. Requires FAD as cofactor.

It catalyses the reaction (S)-malate + a quinone = a quinol + oxaloacetate. Its pathway is carbohydrate metabolism; tricarboxylic acid cycle; oxaloacetate from (S)-malate (quinone route): step 1/1. The sequence is that of Probable malate:quinone oxidoreductase from Bacillus cytotoxicus (strain DSM 22905 / CIP 110041 / 391-98 / NVH 391-98).